Reading from the N-terminus, the 254-residue chain is Insulin-like growth factor-binding protein 4 (254 aa).

The N-terminal stretch at 1–21 is a signal peptide; the sequence is MLPFGLVAALLLAAGPRPSLG. The IGFBP N-terminal domain maps to 23–103; sequence EAIHCPPCSE…MHGQGVCTEL (81 aa). 6 disulfides stabilise this stretch: Cys27/Cys53, Cys30/Cys55, Cys38/Cys56, Cys44/Cys59, Cys67/Cys80, and Cys74/Cys100. An N-linked (GlcNAc...) asparagine glycan is attached at Asn125. 4 disulfides stabilise this stretch: Cys131–Cys138, Cys170–Cys200, Cys211–Cys222, and Cys224–Cys245. Positions 167 to 245 constitute a Thyroglobulin type-1 domain; the sequence is QGSCQSELHR…GLEPKGELDC (79 aa). Ser251 carries the phosphoserine modification.

In terms of assembly, binds IGF2 more than IGF1.

It is found in the secreted. Functionally, IGF-binding proteins prolong the half-life of the IGFs and have been shown to either inhibit or stimulate the growth promoting effects of the IGFs on cell culture. They alter the interaction of IGFs with their cell surface receptors. The protein is Insulin-like growth factor-binding protein 4 (Igfbp4) of Mus musculus (Mouse).